The chain runs to 267 residues: Transcription factor HES-1-A (267 aa).

The segment at methionine 1–glutamate 43 is disordered. The segment covering serine 10–serine 22 has biased composition (low complexity). The segment covering aspartate 26–arginine 35 has biased composition (basic and acidic residues). The bHLH domain maps to histidine 34–leucine 91. An Orange domain is found at tyrosine 110–leucine 143. A WRPW motif motif is present at residues tryptophan 264–tryptophan 267.

Transcription repression requires formation of a complex with a corepressor protein of the Groucho/TLE family. Interacts with the bHLH protein hes2, and binds DNA in the form of a heterodimer with the bHLH protein hey1/hrt1. Interacts with the bHLH protein hes6; this interaction may inhibit the transcriptional repressor activity. Starting from late neurula stage, weakly expressed in midline neural cells, where expression is restricted to the superficial layer of the prospective floorplate. Expressed in the posterior somitic mesoderm (PSM) at tailbud stage. During early tailbud stages, broadly expressed within the pronephric mesoderm both around and inside the developing pronephros. During late tailbud to early tadpole stages, expressed more ventrally in the pronephros, and although initially expressed in both the lateral and medial layers, by these later stages expression is predominantly in the lateral layer. Pronephric expression is no longer detectable in late tadpoles (stage 35).

The protein localises to the nucleus. Transcriptional repressor of a subset of early mesodermal genes including myod1 and t/bra. Binds DNA on N-box motifs: 5'-CACNAG-3'. Acts as a negative regulator of myogenesis, mediating Notch signaling to repress expression of myod1. This chain is Transcription factor HES-1-A (hes1-a), found in Xenopus laevis (African clawed frog).